A 469-amino-acid polypeptide reads, in one-letter code: Neuraminidase (469 aa).

Over 1-9 (MNPNQKIIT) the chain is Intravirion. A helical membrane pass occupies residues 10–30 (IGSVSLTIATVCFLMQIAILV). The involved in apical transport and lipid raft association stretch occupies residues 11 to 33 (GSVSLTIATVCFLMQIAILVTTV). The Virion surface portion of the chain corresponds to 31-469 (TTVTLHFKQY…DGADINLMPI (439 aa)). The segment at 36–88 (HFKQYECDSPANNQVMPCEPIIIERNITEIVYLTNTTIEKEICPKLVEYRNWS) is hypervariable stalk region. N61, N70, and N86 each carry an N-linked (GlcNAc...) asparagine; by host glycan. A head of neuraminidase region spans residues 91-469 (QCKITGFAPF…DGADINLMPI (379 aa)). Intrachain disulfides connect C92–C417, C124–C129, C183–C230, C232–C237, C278–C291, C280–C289, C318–C337, and C421–C447. R118 contributes to the substrate binding site. Residue N146 is glycosylated (N-linked (GlcNAc...) asparagine; by host). D151 functions as the Proton donor/acceptor in the catalytic mechanism. Position 152 (R152) interacts with substrate. N-linked (GlcNAc...) asparagine; by host glycosylation is found at N200 and N234. 276-277 (EE) provides a ligand contact to substrate. Residue R292 coordinates substrate. D293, G297, and D324 together coordinate Ca(2+). The interval 326-350 (PRNNDRSSNSNCRNPNNDKGNHGVK) is disordered. Over residues 331 to 343 (RSSNSNCRNPNND) the composition is skewed to low complexity. R371 is a substrate binding site. N402 is a glycosylation site (N-linked (GlcNAc...) asparagine; by host). The active-site Nucleophile is Y406.

Belongs to the glycosyl hydrolase 34 family. In terms of assembly, homotetramer. Ca(2+) is required as a cofactor. In terms of processing, N-glycosylated.

It localises to the virion membrane. It is found in the host apical cell membrane. It catalyses the reaction Hydrolysis of alpha-(2-&gt;3)-, alpha-(2-&gt;6)-, alpha-(2-&gt;8)- glycosidic linkages of terminal sialic acid residues in oligosaccharides, glycoproteins, glycolipids, colominic acid and synthetic substrates.. Inhibited by the neuraminidase inhibitors zanamivir (Relenza) and oseltamivir (Tamiflu). These drugs interfere with the release of progeny virus from infected cells and are effective against all influenza strains. Resistance to neuraminidase inhibitors is quite rare. Its function is as follows. Catalyzes the removal of terminal sialic acid residues from viral and cellular glycoconjugates. Cleaves off the terminal sialic acids on the glycosylated HA during virus budding to facilitate virus release. Additionally helps virus spread through the circulation by further removing sialic acids from the cell surface. These cleavages prevent self-aggregation and ensure the efficient spread of the progeny virus from cell to cell. Otherwise, infection would be limited to one round of replication. Described as a receptor-destroying enzyme because it cleaves a terminal sialic acid from the cellular receptors. May facilitate viral invasion of the upper airways by cleaving the sialic acid moieties on the mucin of the airway epithelial cells. Likely to plays a role in the budding process through its association with lipid rafts during intracellular transport. May additionally display a raft-association independent effect on budding. Plays a role in the determination of host range restriction on replication and virulence. Sialidase activity in late endosome/lysosome traffic seems to enhance virus replication. This chain is Neuraminidase, found in Aves (whales).